Reading from the N-terminus, the 434-residue chain is MAQFDLTRINCQYLDRHLTFPLLEFLCGKEIYNQQELLEYILETVNKTNMIDYTMDTRKRLNLSQEMPDELVQRKAEVLATLKQLQNEVAPIMKATDILKNGESMKDSKTFVNALQKDYNFKVEHLESAYKLAKYLYECGNYQESTSYLYFCLIVMSPNDKNYLNVLWGKLAAEILTLNWNTALEDLTRLRDYIDSANFSTIQALQQRTWLIHWSVLVFFNHPKGRDLIIEMFLYKPLYLNAIQTMCPHIMRYLATAVVINRTRRNALKDLIKVIQQESYTYRDPITEFLECLYVNFDFEGARLKLHECQTVILNDFFIVACLNEFVEDARLMIFETFCRIHQCITISMLADKLNMKPNEAECWIVNLIRNARLNAKIDSKLGHVVMGTQPLSPYQQLVEKIDSLSMRSEHLAGLIERKSKQKNQESIDSWKYY.

One can recognise a PCI domain in the interval 219–392 (FFNHPKGRDL…GHVVMGTQPL (174 aa)).

It belongs to the eIF-3 subunit E family. In terms of assembly, component of the eukaryotic translation initiation factor 3 (eIF-3) complex. The eIF-3 complex interacts with pix. Interacts with mxt.

The protein resides in the cytoplasm. In terms of biological role, component of the eukaryotic translation initiation factor 3 (eIF-3) complex, which is involved in protein synthesis of a specialized repertoire of mRNAs and, together with other initiation factors, stimulates binding of mRNA and methionyl-tRNAi to the 40S ribosome. The eIF-3 complex specifically targets and initiates translation of a subset of mRNAs involved in cell proliferation. The chain is Eukaryotic translation initiation factor 3 subunit E (eIF3-S6) from Drosophila virilis (Fruit fly).